The following is a 704-amino-acid chain: DNA ligase (704 aa).

NAD(+)-binding positions include 43–47, 92–93, and Glu-124; these read DADYD and SL. The active-site N6-AMP-lysine intermediate is the Lys-126. Positions 147, 182, 298, and 322 each coordinate NAD(+). 4 residues coordinate Zn(2+): Cys-427, Cys-430, Cys-445, and Cys-451. In terms of domain architecture, BRCT spans 625–704; sequence PVASPVAGKI…DGWLRLIGDA (80 aa).

This sequence belongs to the NAD-dependent DNA ligase family. LigA subfamily. The cofactor is Mg(2+). Mn(2+) serves as cofactor.

It carries out the reaction NAD(+) + (deoxyribonucleotide)n-3'-hydroxyl + 5'-phospho-(deoxyribonucleotide)m = (deoxyribonucleotide)n+m + AMP + beta-nicotinamide D-nucleotide.. In terms of biological role, DNA ligase that catalyzes the formation of phosphodiester linkages between 5'-phosphoryl and 3'-hydroxyl groups in double-stranded DNA using NAD as a coenzyme and as the energy source for the reaction. It is essential for DNA replication and repair of damaged DNA. The polypeptide is DNA ligase (Cereibacter sphaeroides (strain ATCC 17029 / ATH 2.4.9) (Rhodobacter sphaeroides)).